The chain runs to 181 residues: Mating-type M-specific polypeptide Mc (181 aa).

The segment at residues 103–171 (TPRPPNAFIL…QHQKMYPGYK (69 aa)) is a DNA-binding region (HMG box).

It localises to the nucleus. The protein localises to the cytoplasm. Its subcellular location is the cytoskeleton. The protein resides in the microtubule organizing center. It is found in the spindle pole body. Functionally, mating type proteins are sequence specific DNA-binding proteins that act as master switches in yeast differentiation by controlling gene expression in a cell type-specific fashion. Positive regulator of MFM genes. The HMG box recognizes the DNA sequence 5'-AACAAAG-3'. Required for conjugation and efficient meiosis. The protein is Mating-type M-specific polypeptide Mc (mat3-Mc) of Schizosaccharomyces pombe (Fission yeast).